The chain runs to 223 residues: 2-C-methyl-D-erythritol 4-phosphate cytidylyltransferase (223 aa).

The protein belongs to the IspD/TarI cytidylyltransferase family. IspD subfamily.

The catalysed reaction is 2-C-methyl-D-erythritol 4-phosphate + CTP + H(+) = 4-CDP-2-C-methyl-D-erythritol + diphosphate. The protein operates within isoprenoid biosynthesis; isopentenyl diphosphate biosynthesis via DXP pathway; isopentenyl diphosphate from 1-deoxy-D-xylulose 5-phosphate: step 2/6. Its function is as follows. Catalyzes the formation of 4-diphosphocytidyl-2-C-methyl-D-erythritol from CTP and 2-C-methyl-D-erythritol 4-phosphate (MEP). This is 2-C-methyl-D-erythritol 4-phosphate cytidylyltransferase from Prochlorococcus marinus (strain MIT 9515).